The following is a 97-amino-acid chain: YcgL domain-containing protein PA1295 (97 aa).

One can recognise a YcgL domain in the interval Arg3–Pro87.

The polypeptide is YcgL domain-containing protein PA1295 (Pseudomonas aeruginosa (strain ATCC 15692 / DSM 22644 / CIP 104116 / JCM 14847 / LMG 12228 / 1C / PRS 101 / PAO1)).